A 473-amino-acid chain; its full sequence is Probable cytosolic iron-sulfur protein assembly protein 1 (473 aa).

A disordered region spans residues 1–25 (MPSSTPGGSLKHLSDLTPPSQDRTW). 2 WD repeats span residues 11–58 (KHLS…LLST) and 62–104 (GHKR…GRAE). The tract at residues 112–133 (GGLAEADRQEGDDTDGDEEDED) is disordered. Acidic residues predominate over residues 123–133 (DDTDGDEEDED). 4 WD repeats span residues 144–183 (GHDSEVKSVSWSSGGSLLATCSRDKSIWIWEDLEDGDNNF), 191–230 (EHSGDVKWVAWHPEEECLASGSYDDTIRLWREDVDDWGQV), 235–313 (GHEG…KPPP), and 341–380 (MHDLSIYSVAWSKKTGLIASTGADGRIVIYQERFTSKPPV). Residues 377–405 (KPPVHTTSEQDKPDSARETQKANGERTAP) are disordered. A compositionally biased stretch (basic and acidic residues) spans 384–400 (SEQDKPDSARETQKANG). One copy of the WD 7 repeat lies at 438–473 (SQQQNFDNSEMDHANEEEVLLSTGDDGVVRVWTLER).

Belongs to the WD repeat CIA1 family.

Its function is as follows. Essential component of the cytosolic iron-sulfur (Fe/S) protein assembly machinery. Required for the maturation of extramitochondrial Fe/S proteins. This Coccidioides immitis (strain RS) (Valley fever fungus) protein is Probable cytosolic iron-sulfur protein assembly protein 1.